The primary structure comprises 282 residues: MRWWPALPLLLLAVAVAGAGDAAPVCTRPSAAEAIVGSPEACRSPLRRPLGVTEGDDAILARAVNLLHANKEDFAAVLFYASWCPFSQECRLRFEKLACIFPTIRHLAIEESTVRLRTRYRYGIHGYPTLFLINSTVRVRYHGPRTVKSLAAFYNDVSGINPSMDPAVGDDNIEPKRDCEQEKCLFWSARTPENILQPDTYLTLAASFVILRLLYLFYPKITAFVKRTWSRRTLFTCLEQGKHKFNRVYPSKQGNLHDGARHATAWASKSLASVSIGEPSTS.

An N-terminal signal peptide occupies residues 1-19 (MRWWPALPLLLLAVAVAGA). In terms of domain architecture, Thioredoxin spans 20 to 159 (GDAAPVCTRP…LAAFYNDVSG (140 aa)). Residue asparagine 134 is glycosylated (N-linked (GlcNAc...) asparagine). A helical membrane pass occupies residues 205 to 225 (AASFVILRLLYLFYPKITAFV).

The protein localises to the membrane. The protein is 5'-adenylylsulfate reductase-like 2 (APRL2) of Oryza sativa subsp. japonica (Rice).